The following is a 211-amino-acid chain: MATFSLTSTLPSSSPTTSLHSIPKPKLKPSTINFTHNLNPFNPNLKPSRHHYLSNYGPYVKAIALDFSGSFFEGGFGGLDEDPPSTPPAGLAVEEKPEPQCPPGLRQYETMAVLRPDMTEDERLTLTQKYEELLVAGGAMYVEVFNRGVIPLAYSIKRKNKAGETNNYLDGIYLLFTYFTKPESISPLEAALVTDDDVIRSSSFKIRKRKY.

A compositionally biased stretch (low complexity) spans 1–19; that stretch reads MATFSLTSTLPSSSPTTSL. Disordered stretches follow at residues 1 to 25 and 80 to 100; these read MATF…IPKP and DEDP…PEPQ. The N-terminal 65 residues, 1–65, are a transit peptide targeting the chloroplast; sequence MATFSLTSTL…YGPYVKAIAL (65 aa).

The protein belongs to the bacterial ribosomal protein bS6 family. Component of the chloroplast small ribosomal subunit (SSU). Mature 70S chloroplast ribosomes of higher plants consist of a small (30S) and a large (50S) subunit. The 30S small subunit contains 1 molecule of ribosomal RNA (16S rRNA) and 24 different proteins. The 50S large subunit contains 3 rRNA molecules (23S, 5S and 4.5S rRNA) and 33 different proteins.

It is found in the plastid. The protein resides in the chloroplast. In terms of biological role, component of the chloroplast ribosome (chloro-ribosome), a dedicated translation machinery responsible for the synthesis of chloroplast genome-encoded proteins, including proteins of the transcription and translation machinery and components of the photosynthetic apparatus. The chain is Small ribosomal subunit protein bS6c alpha (RPS6) from Spinacia oleracea (Spinach).